A 123-amino-acid polypeptide reads, in one-letter code: Small ribosomal subunit protein bS18 (123 aa).

Over residues 1-10 (MADETTVSTP) the composition is skewed to polar residues. Residues 1–52 (MADETTVSTPAASGTETPSTGGGGAPQGRPQGGPRGDRGPRPGGSGRDGGRK) are disordered. Residues 20-34 (TGGGGAPQGRPQGGP) show a composition bias toward gly residues.

This sequence belongs to the bacterial ribosomal protein bS18 family. In terms of assembly, part of the 30S ribosomal subunit. Forms a tight heterodimer with protein bS6.

Binds as a heterodimer with protein bS6 to the central domain of the 16S rRNA, where it helps stabilize the platform of the 30S subunit. This is Small ribosomal subunit protein bS18 from Koribacter versatilis (strain Ellin345).